The sequence spans 225 residues: tRNA (guanine-N(1)-)-methyltransferase (225 aa).

S-adenosyl-L-methionine-binding positions include Gly112 and 132 to 137 (IGDYVL).

Belongs to the RNA methyltransferase TrmD family. Homodimer.

Its subcellular location is the cytoplasm. It catalyses the reaction guanosine(37) in tRNA + S-adenosyl-L-methionine = N(1)-methylguanosine(37) in tRNA + S-adenosyl-L-homocysteine + H(+). Its function is as follows. Specifically methylates guanosine-37 in various tRNAs. This Porphyromonas gingivalis (strain ATCC BAA-308 / W83) protein is tRNA (guanine-N(1)-)-methyltransferase.